The sequence spans 519 residues: NADH-ubiquinone oxidoreductase chain 4 (519 aa).

The next 14 helical transmembrane spans lie at Ser-2–Phe-22, Ile-68–Asp-88, Val-112–Ile-132, Leu-146–Leu-166, Leu-167–Gly-187, Phe-196–Met-216, Ile-239–Asn-259, Pro-270–Phe-290, Tyr-304–Leu-324, Ile-333–Ile-353, Ile-360–Val-380, Val-399–Leu-419, Leu-437–Tyr-457, and Phe-484–Ile-504.

This sequence belongs to the complex I subunit 4 family.

It is found in the mitochondrion membrane. It catalyses the reaction a ubiquinone + NADH + 5 H(+)(in) = a ubiquinol + NAD(+) + 4 H(+)(out). Its function is as follows. Core subunit of the mitochondrial membrane respiratory chain NADH dehydrogenase (Complex I) that is believed to belong to the minimal assembly required for catalysis. Complex I functions in the transfer of electrons from NADH to the respiratory chain. The immediate electron acceptor for the enzyme is believed to be ubiquinone. The chain is NADH-ubiquinone oxidoreductase chain 4 (ND4) from Podospora anserina (strain S / ATCC MYA-4624 / DSM 980 / FGSC 10383) (Pleurage anserina).